The sequence spans 3066 residues: Genome polyprotein (3066 aa).

The 141-residue stretch at T168–Y308 folds into the Peptidase S30 domain. Catalysis depends on for P1 proteinase activity residues H221, E230, and S262. The Involved in interaction with stylet and aphid transmission signature appears at K361–C364. The Involved in virions binding and aphid transmission signature appears at P617 to K619. A Peptidase C6 domain is found at M643–G765. Residues C651 and H724 each act as for helper component proteinase activity in the active site. The Helicase ATP-binding domain maps to L1236–E1388. G1249–S1256 lines the ATP pocket. Positions D1338–H1341 match the DECH box motif. In terms of domain architecture, Helicase C-terminal spans D1407–S1566. Residues K1891–R1900 carry the Nuclear localization signal motif. At Y1915 the chain carries O-(5'-phospho-RNA)-tyrosine. The Peptidase C4 domain maps to S2042–E2260. Residues H2087, D2122, and C2192 each act as for nuclear inclusion protein A activity in the active site. Residues W2526–Y2650 enclose the RdRp catalytic domain. The disordered stretch occupies residues S2799–G2836. Positions G2803–K2818 are enriched in basic and acidic residues. A compositionally biased stretch (low complexity) spans S2819–K2831. T3048 carries the phosphothreonine modification.

This sequence belongs to the potyviridae genome polyprotein family. As to quaternary structure, interacts with host eIF4E protein (via cap-binding region); this interaction mediates the translation of the VPg-viral RNA conjugates. Part of a complex that comprises VPg, RNA, host EIF4E and EIF4G; this interaction mediates the translation of the VPg-viral RNA conjugates. In terms of assembly, interacts with host eIF4E proteins in the host cytoplasm. VPg is uridylylated by the polymerase and is covalently attached to the 5'-end of the genomic RNA. This uridylylated form acts as a nucleotide-peptide primer for the polymerase. Post-translationally, potyviral RNA is expressed as two polyproteins which undergo post-translational proteolytic processing. Genome polyprotein is processed by NIa-pro, P1 and HC-pro proteinases resulting in the production of at least ten individual proteins. P3N-PIPO polyprotein is cleaved by P1 and HC-pro proteinases resulting in the production of three individual proteins. The P1 proteinase and the HC-pro cleave only their respective C-termini autocatalytically. 6K1 is essential for proper proteolytic separation of P3 from CI.

The protein localises to the host cytoplasmic vesicle. Its subcellular location is the host cytoplasm. It is found in the host nucleus. It localises to the virion. The enzyme catalyses RNA(n) + a ribonucleoside 5'-triphosphate = RNA(n+1) + diphosphate. It catalyses the reaction Hydrolyzes glutaminyl bonds, and activity is further restricted by preferences for the amino acids in P6 - P1' that vary with the species of potyvirus, e.g. Glu-Xaa-Xaa-Tyr-Xaa-Gln-|-(Ser or Gly) for the enzyme from tobacco etch virus. The natural substrate is the viral polyprotein, but other proteins and oligopeptides containing the appropriate consensus sequence are also cleaved.. The catalysed reaction is Hydrolyzes a Gly-|-Gly bond at its own C-terminus, commonly in the sequence -Tyr-Xaa-Val-Gly-|-Gly, in the processing of the potyviral polyprotein.. In terms of biological role, required for aphid transmission and also has proteolytic activity. Only cleaves a Gly-Gly dipeptide at its own C-terminus. Interacts with virions and aphid stylets. Acts as a suppressor of RNA-mediated gene silencing, also known as post-transcriptional gene silencing (PTGS), a mechanism of plant viral defense that limits the accumulation of viral RNAs. May have RNA-binding activity. Its function is as follows. Has helicase activity. It may be involved in replication. Indispensable for virus replication. Reduces the abundance of host transcripts related to jasmonic acid biosynthesis therefore altering the host defenses. In order to increase its own stability, decreases host protein degradation pathways. Functionally, indispensable for virus replication. In terms of biological role, mediates the cap-independent, EIF4E-dependent translation of viral genomic RNAs. Binds to the cap-binding site of host EIF4E and thus interferes with the host EIF4E-dependent mRNA export and translation. VPg-RNA directly binds EIF4E and is a template for transcription. Also forms trimeric complexes with EIF4E-EIF4G, which are templates for translation. Its function is as follows. Has RNA-binding and proteolytic activities. An RNA-dependent RNA polymerase that plays an essential role in the virus replication. Functionally, involved in aphid transmission, cell-to-cell and systemis movement, encapsidation of the viral RNA and in the regulation of viral RNA amplification. In Glycine max (Soybean), this protein is Genome polyprotein.